Consider the following 933-residue polypeptide: Progesterone receptor (933 aa).

An AF3; mediates transcriptional activation region spans residues 1-164 (MTELKAKGPR…PATQGVLSPL (164 aa)). The tract at residues 1–256 (MTELKAKGPR…AAAGGGAAAV (256 aa)) is disordered. The tract at residues 1–566 (MTELKAKGPR…YSFESLPQKI (566 aa)) is modulating, Pro-Rich. A Phosphoserine modification is found at S20. An LXXL motif 1 motif is present at residues 55–59 (LDGLL). Phosphoserine is present on S81. The LXXL motif 2 motif lies at 115–119 (LDTLL). S130 and S162 each carry phosphoserine. Residues 165–305 (MSRSGCKAGD…LATTMMDFIH (141 aa)) are mediates transcriptional transrepression. Positions 183 to 187 (KVLPR) match the Nuclear localization signal motif. A phosphoserine mark is found at S190 and S213. Over residues 220–231 (EVEEEDGSESEE) the composition is skewed to acidic residues. A compositionally biased stretch (low complexity) spans 232–246 (SAGPLLKGKPRALGG). S294 carries the phosphoserine; by MAPK1 modification. Positions 331–378 (GGAGAASAFAPPRSSPSASSTPVAVGDFPDCAYPPDAEPKDDAYPLYS) are disordered. The span at 335–350 (AASAFAPPRSSPSASS) shows a compositional bias: low complexity. S345 is subject to Phosphoserine; by MAPK. K388 participates in a covalent cross-link: Glycyl lysine isopeptide (Lys-Gly) (interchain with G-Cter in SUMO); alternate. K388 participates in a covalent cross-link: Glycyl lysine isopeptide (Lys-Gly) (interchain with G-Cter in ubiquitin); alternate. The residue at position 400 (S400) is a Phosphoserine; by CDK2. The disordered stretch occupies residues 415–452 (PDFPLGPPPPLPPRAPPSRPGEAAVTAAPASASVSSAS). Over residues 418–433 (PLGPPPPLPPRAPPSR) the composition is skewed to pro residues. Over residues 434–452 (PGEAAVTAAPASASVSSAS) the composition is skewed to low complexity. Residues 456–546 (STLECILYKA…VYPPYLNYLR (91 aa)) form an AF1; mediates transcriptional activation region. A Glycyl lysine isopeptide (Lys-Gly) (interchain with G-Cter in SUMO) cross-link involves residue K531. 2 NR C4-type zinc fingers span residues 567–587 (CLICGDEASGCHYGVLTCGSC) and 603–627 (CAGRNDCIVDKIRRKNCPACRLRKC). The nuclear receptor DNA-binding region spans 567–639 (CLICGDEASG…AGMVLGGRKF (73 aa)). S676 is modified (phosphoserine). Residues 679–913 (QDIQLIPPLI…EFPEMMSEVI (235 aa)) form the NR LBD domain. Residues 687 to 933 (LINLLMSIEP…MVKPLLFHKK (247 aa)) form an AF2; mediates transcriptional activation region. R766 contacts progesterone.

The protein belongs to the nuclear hormone receptor family. Interacts with SMARD1 and UNC45A. Interacts with CUEDC2; the interaction promotes ubiquitination, decreases sumoylation, and represses transcriptional activity. Interacts with PIAS3; the interaction promotes sumoylation of PR in a hormone-dependent manner, inhibits DNA-binding, and alters nuclear export. Interacts with SP1; the interaction requires ligand-induced phosphorylation on Ser-345 by ERK1/2-MAPK. Interacts with PRMT2. Interacts with NCOA2 and NCOA1. Interacts with KLF9. Interacts with GTF2B. In terms of processing, phosphorylated on multiple serine sites. Several of these sites are hormone-dependent. Phosphorylation on Ser-294 is highly hormone-dependent and modulates ubiquitination and sumoylation on Lys-388. Phosphorylation on Ser-102 and Ser-345 also requires induction by hormone. Basal phosphorylation on Ser-81, Ser-162, Ser-190 and Ser-400 is increased in response to progesterone and can be phosphorylated in vitro by the CDK2-A1 complex. Increased levels of phosphorylation on Ser-400 also in the presence of EGF, heregulin, IGF, PMA and FBS. Phosphorylation at this site by CDK2 is ligand-independent, and increases nuclear translocation and transcriptional activity. Phosphorylation at Ser-162 and Ser-294, but not at Ser-190, is impaired during the G(2)/M phase of the cell cycle. Phosphorylation on Ser-345 by ERK1/2 MAPK is required for interaction with SP1. Post-translationally, sumoylation is hormone-dependent and represses transcriptional activity. Sumoylation on all three sites is enhanced by PIAS3. Desumoylated by SENP1. Sumoylation on Lys-388, the main site of sumoylation, is repressed by ubiquitination on the same site, and modulated by phosphorylation at Ser-294. Ubiquitination is hormone-dependent and represses sumoylation on the same site. Promoted by MAPK-mediated phosphorylation on Ser-294. Ubiquitinated by UBR5, leading to its degradation: UBR5 specifically recognizes and binds ligand-bound PGR when it is not associated with coactivators (NCOAs). In presence of NCOAs, the UBR5-degron is not accessible, preventing its ubiquitination and degradation. In terms of processing, palmitoylated by ZDHHC7 and ZDHHC21. Palmitoylation is required for plasma membrane targeting and for rapid intracellular signaling via ERK and AKT kinases and cAMP generation.

It is found in the nucleus. The protein resides in the cytoplasm. Its function is as follows. The steroid hormones and their receptors are involved in the regulation of eukaryotic gene expression and affect cellular proliferation and differentiation in target tissues. Transcriptional activator of several progesteron-dependent promoters in a variety of cell types. Involved in activation of SRC-dependent MAPK signaling on hormone stimulation. The polypeptide is Progesterone receptor (PGR) (Pan paniscus (Pygmy chimpanzee)).